A 191-amino-acid chain; its full sequence is Programmed cell death protein 6 (191 aa).

N-acetylalanine is present on alanine 2. EF-hand domains are found at residues 23-58 (PDQSFLWNVFQRVDKDRSGVISDTELQQALSNGTWT), 59-89 (PFNPVTVRSIISMFDRENKAGVNFSEFTGVW), 90-125 (KYITDWQNVFRTYDRDNSGMIDKNELKQALSGFGYR), 126-161 (LSDQFHDILIRKFDRQGRGQIAFDDFIQGCIVLQRL), and 162-191 (TDIFRRYDTDQDGWIQVSYEQYLSMVFSIV). Ca(2+) is bound by residues aspartate 36, aspartate 38, serine 40, valine 42, and glutamate 47. Ca(2+)-binding residues include aspartate 103, aspartate 105, serine 107, methionine 109, and glutamate 114. Mg(2+) is bound by residues aspartate 169, aspartate 171, aspartate 173, and tryptophan 175.

Homodimer and heterodimer; heterodimerizes (via the EF-hand 5) with PEF1. Isoform 1 and isoform 2 self-associate; probably forming homodimers. Interacts with CPNE4 (via VWFA domain). Interacts with PDCD6IP; the interaction is calcium-dependent. Interacts with RBM22. Interacts with PLSCR4. Interacts with ANXA7 and TSG101. Interacts with DAPK1. Interacts with SEC31A; the interaction is calcium-dependent and promotes monoubiquitination of SEC31A. Interacts with ANXA11 (via N-terminus); the interaction is calcium-dependent. Interacts with PLSCR3 (via N-terminus); the interaction is calcium-dependent. Interacts with MCOLN1; the interaction is calcium-dependent. Interacts with KDR; the interaction is calcium-dependent. Interacts with HEBP2; the interaction is calcium-dependent. Interacts with TFG. Isoform 1: Interacts with SHISA5, leading to stabilize it. Isoform 2: Does not interact with SHISA5. Isoform 2: Does not interact with PDCD6IP, TSG101, ANXA7 and ANXA11.

It localises to the endoplasmic reticulum membrane. The protein resides in the cytoplasmic vesicle. It is found in the COPII-coated vesicle membrane. The protein localises to the cytoplasm. Its subcellular location is the nucleus. It localises to the endosome. Its function is as follows. Calcium sensor that plays a key role in processes such as endoplasmic reticulum (ER)-Golgi vesicular transport, endosomal biogenesis or membrane repair. Acts as an adapter that bridges unrelated proteins or stabilizes weak protein-protein complexes in response to calcium: calcium-binding triggers exposure of apolar surface, promoting interaction with different sets of proteins thanks to 3 different hydrophobic pockets, leading to translocation to membranes. Involved in ER-Golgi transport by promoting the association between PDCD6IP and TSG101, thereby bridging together the ESCRT-III and ESCRT-I complexes. Together with PEF1, acts as a calcium-dependent adapter for the BCR(KLHL12) complex, a complex involved in ER-Golgi transport by regulating the size of COPII coats. In response to cytosolic calcium increase, the heterodimer formed with PEF1 interacts with, and bridges together the BCR(KLHL12) complex and SEC31 (SEC31A or SEC31B), promoting monoubiquitination of SEC31 and subsequent collagen export, which is required for neural crest specification. Involved in the regulation of the distribution and function of MCOLN1 in the endosomal pathway. Promotes localization and polymerization of TFG at endoplasmic reticulum exit site. Required for T-cell receptor-, Fas-, and glucocorticoid-induced apoptosis. May mediate Ca(2+)-regulated signals along the death pathway: interaction with DAPK1 can accelerate apoptotic cell death by increasing caspase-3 activity. Its role in apoptosis may however be indirect, as suggested by knockout experiments. May inhibit KDR/VEGFR2-dependent angiogenesis; the function involves inhibition of VEGF-induced phosphorylation of the Akt signaling pathway. In case of infection by HIV-1 virus, indirectly inhibits HIV-1 production by affecting viral Gag expression and distribution. In terms of biological role, has a lower Ca(2+) affinity than isoform 1. This Homo sapiens (Human) protein is Programmed cell death protein 6 (PDCD6).